A 252-amino-acid chain; its full sequence is Pyridoxine 5'-phosphate synthase (252 aa).

3-amino-2-oxopropyl phosphate is bound by residues Asn-8 and Arg-19. The active-site Proton acceptor is His-44. Residues Arg-46 and His-51 each coordinate 1-deoxy-D-xylulose 5-phosphate. Catalysis depends on Glu-75, which acts as the Proton acceptor. Position 110 (Thr-110) interacts with 1-deoxy-D-xylulose 5-phosphate. His-201 acts as the Proton donor in catalysis. 3-amino-2-oxopropyl phosphate-binding positions include Asp-202 and 224–225 (GH).

This sequence belongs to the PNP synthase family. Homooctamer; tetramer of dimers.

It localises to the cytoplasm. The enzyme catalyses 3-amino-2-oxopropyl phosphate + 1-deoxy-D-xylulose 5-phosphate = pyridoxine 5'-phosphate + phosphate + 2 H2O + H(+). It functions in the pathway cofactor biosynthesis; pyridoxine 5'-phosphate biosynthesis; pyridoxine 5'-phosphate from D-erythrose 4-phosphate: step 5/5. Functionally, catalyzes the complicated ring closure reaction between the two acyclic compounds 1-deoxy-D-xylulose-5-phosphate (DXP) and 3-amino-2-oxopropyl phosphate (1-amino-acetone-3-phosphate or AAP) to form pyridoxine 5'-phosphate (PNP) and inorganic phosphate. This Albidiferax ferrireducens (strain ATCC BAA-621 / DSM 15236 / T118) (Rhodoferax ferrireducens) protein is Pyridoxine 5'-phosphate synthase.